Consider the following 443-residue polypeptide: Oxygen-dependent coproporphyrinogen-III oxidase, mitochondrial (443 aa).

Residues Met-1–Arg-98 constitute a mitochondrion transit peptide. Residues Glu-89–Leu-112 are disordered. The residue at position 101 (Ser-101) is a Phosphoserine. Residues Gly-103–Leu-112 are compositionally biased toward basic and acidic residues. Positions Val-182–Lys-191 are important for dimerization. Ser-233 provides a ligand contact to coproporphyrinogen III. The active-site Proton donor is His-247. Asn-249–Arg-251 serves as a coordination point for coproporphyrinogen III. The tract at residues Tyr-381 to Glu-417 is important for dimerization. Lys-393 is subject to N6-acetyllysine; alternate. Residue Lys-393 is modified to N6-succinyllysine; alternate. Gly-400 to Arg-402 is a binding site for coproporphyrinogen III.

This sequence belongs to the aerobic coproporphyrinogen-III oxidase family. As to quaternary structure, homodimer. In terms of tissue distribution, expressed in erythroid cells. Expressed in liver.

Its subcellular location is the mitochondrion intermembrane space. The catalysed reaction is coproporphyrinogen III + O2 + 2 H(+) = protoporphyrinogen IX + 2 CO2 + 2 H2O. Its pathway is porphyrin-containing compound metabolism; protoporphyrin-IX biosynthesis; protoporphyrinogen-IX from coproporphyrinogen-III (O2 route): step 1/1. Involved in the heme biosynthesis. Catalyzes the aerobic oxidative decarboxylation of propionate groups of rings A and B of coproporphyrinogen-III to yield the vinyl groups in protoporphyrinogen-IX. This chain is Oxygen-dependent coproporphyrinogen-III oxidase, mitochondrial (Cpox), found in Mus musculus (Mouse).